We begin with the raw amino-acid sequence, 369 residues long: Flagellar P-ring protein (369 aa).

Positions 1 to 22 are cleaved as a signal peptide; that stretch reads MLNFKHLMAAALLLSTSLGVQA.

It belongs to the FlgI family. In terms of assembly, the basal body constitutes a major portion of the flagellar organelle and consists of four rings (L,P,S, and M) mounted on a central rod.

The protein localises to the periplasm. It localises to the bacterial flagellum basal body. In terms of biological role, assembles around the rod to form the L-ring and probably protects the motor/basal body from shearing forces during rotation. In Pseudomonas fluorescens (strain ATCC BAA-477 / NRRL B-23932 / Pf-5), this protein is Flagellar P-ring protein.